A 399-amino-acid polypeptide reads, in one-letter code: 3-phosphoshikimate 1-carboxyvinyltransferase (399 aa).

Positions 19, 20, and 24 each coordinate 3-phosphoshikimate. Lys-19 contacts phosphoenolpyruvate. Residues Gly-83 and Arg-111 each contribute to the phosphoenolpyruvate site. Residues Ser-152, Ser-153, Gln-154, Asp-288, Gln-310, and Lys-314 each contribute to the 3-phosphoshikimate site. Residue Gln-154 coordinates phosphoenolpyruvate. The Proton acceptor role is filled by Asp-288. Positions 318, 359, and 385 each coordinate phosphoenolpyruvate.

This sequence belongs to the EPSP synthase family. Monomer.

It localises to the cytoplasm. The enzyme catalyses 3-phosphoshikimate + phosphoenolpyruvate = 5-O-(1-carboxyvinyl)-3-phosphoshikimate + phosphate. The protein operates within metabolic intermediate biosynthesis; chorismate biosynthesis. In terms of biological role, catalyzes the transfer of the enolpyruvyl moiety of phosphoenolpyruvate (PEP) to the 5-hydroxyl of shikimate-3-phosphate (S3P) to produce enolpyruvyl shikimate-3-phosphate and inorganic phosphate. This is 3-phosphoshikimate 1-carboxyvinyltransferase from Thermococcus kodakarensis (strain ATCC BAA-918 / JCM 12380 / KOD1) (Pyrococcus kodakaraensis (strain KOD1)).